The chain runs to 264 residues: Major prion protein 1 (264 aa).

An N-terminal signal peptide occupies residues 1–24 (MVKSHIGSWILVLFVAMWSDVALC). An interaction with GRB2, ERI3 and SYN1 region spans residues 25-241 (KKRPKPGGGW…ESEAYYQRGA (217 aa)). Positions 28-118 (PKPGGGWNTG…QWNKPSKPKT (91 aa)) are disordered. A run of 6 repeats spans residues 54–62 (SQGGGGWGQ), 63–70 (PHGGGWGQ), 71–78 (PHGGGWGQ), 79–86 (PHGGGWGQ), 87–94 (PHGGGWGQ), and 95–103 (PHGGGGWGQ). The 6 X 8 AA tandem repeats of P-H-G-G-G-W-G-Q stretch occupies residues 54-103 (SQGGGGWGQPHGGGWGQPHGGGWGQPHGGGWGQPHGGGWGQPHGGGGWGQ). The span at 55-107 (QGGGGWGQPHGGGWGQPHGGGWGQPHGGGWGQPHGGGWGQPHGGGGWGQGGTH) shows a compositional bias: gly residues. 12 residues coordinate Cu(2+): His72, Gly73, Gly74, His80, Gly81, Gly82, His88, Gly89, Gly90, His96, Gly98, and Gly99. Cys190 and Cys225 are oxidised to a cystine. Residues Asn192 and Asn208 are each glycosylated (N-linked (GlcNAc...) asparagine). A lipid anchor (GPI-anchor amidated alanine) is attached at Ala241. A propeptide spans 242-264 (SVILFSSPPVILLISFLIFLIVG) (removed in mature form).

The protein belongs to the prion family. Monomer and homodimer. Has a tendency to aggregate into amyloid fibrils containing a cross-beta spine, formed by a steric zipper of superposed beta-strands. Soluble oligomers may represent an intermediate stage on the path to fibril formation. Copper binding may promote oligomerization. Interacts with GRB2, APP, ERI3/PRNPIP and SYN1. Mislocalized cytosolically exposed PrP interacts with MGRN1; this interaction alters MGRN1 subcellular location and causes lysosomal enlargement. Interacts with KIAA1191.

It localises to the cell membrane. Its subcellular location is the golgi apparatus. In terms of biological role, its primary physiological function is unclear. Has cytoprotective activity against internal or environmental stresses. May play a role in neuronal development and synaptic plasticity. May be required for neuronal myelin sheath maintenance. May play a role in iron uptake and iron homeostasis. Soluble oligomers are toxic to cultured neuroblastoma cells and induce apoptosis (in vitro). Association with GPC1 (via its heparan sulfate chains) targets PRNP to lipid rafts. Also provides Cu(2+) or Zn(2+) for the ascorbate-mediated GPC1 deaminase degradation of its heparan sulfate side chains. The protein is Major prion protein 1 of Tragelaphus strepsiceros (Greater kudu).